A 172-amino-acid polypeptide reads, in one-letter code: Adenine phosphoribosyltransferase (172 aa).

Belongs to the purine/pyrimidine phosphoribosyltransferase family. Homodimer.

The protein localises to the cytoplasm. It catalyses the reaction AMP + diphosphate = 5-phospho-alpha-D-ribose 1-diphosphate + adenine. The protein operates within purine metabolism; AMP biosynthesis via salvage pathway; AMP from adenine: step 1/1. Catalyzes a salvage reaction resulting in the formation of AMP, that is energically less costly than de novo synthesis. The protein is Adenine phosphoribosyltransferase of Gloeothece citriformis (strain PCC 7424) (Cyanothece sp. (strain PCC 7424)).